A 351-amino-acid polypeptide reads, in one-letter code: Dihydroorotate dehydrogenase (quinone) (351 aa).

FMN-binding positions include 61–65 and T85; that span reads AGLDK. K65 lines the substrate pocket. Residue 110 to 114 coordinates substrate; it reads NRMGF. Residues N139 and N172 each coordinate FMN. N172 lines the substrate pocket. The Nucleophile role is filled by S175. Residue N177 participates in substrate binding. FMN contacts are provided by K217 and T245. A substrate-binding site is contributed by 246–247; the sequence is NT. FMN contacts are provided by residues G268, G297, and 318 to 319; that span reads YS.

Belongs to the dihydroorotate dehydrogenase family. Type 2 subfamily. Monomer. FMN serves as cofactor.

It is found in the cell membrane. The enzyme catalyses (S)-dihydroorotate + a quinone = orotate + a quinol. It participates in pyrimidine metabolism; UMP biosynthesis via de novo pathway; orotate from (S)-dihydroorotate (quinone route): step 1/1. In terms of biological role, catalyzes the conversion of dihydroorotate to orotate with quinone as electron acceptor. This chain is Dihydroorotate dehydrogenase (quinone), found in Xanthomonas euvesicatoria pv. vesicatoria (strain 85-10) (Xanthomonas campestris pv. vesicatoria).